The chain runs to 376 residues: PqqA peptide cyclase (376 aa).

Residues 7–222 enclose the Radical SAM core domain; the sequence is VGLPLWLLAE…TNEYRDKLKA (216 aa). Residues C21, C25, and C28 each coordinate [4Fe-4S] cluster.

It belongs to the radical SAM superfamily. PqqE family. Interacts with PqqD. The interaction is necessary for activity of PqqE. The cofactor is [4Fe-4S] cluster.

The catalysed reaction is [PQQ precursor protein] + S-adenosyl-L-methionine = E-Y cross-linked-[PQQ precursor protein] + 5'-deoxyadenosine + L-methionine + H(+). Its pathway is cofactor biosynthesis; pyrroloquinoline quinone biosynthesis. Its function is as follows. Catalyzes the cross-linking of a glutamate residue and a tyrosine residue in the PqqA protein as part of the biosynthesis of pyrroloquinoline quinone (PQQ). This Pseudomonas putida (strain ATCC 700007 / DSM 6899 / JCM 31910 / BCRC 17059 / LMG 24140 / F1) protein is PqqA peptide cyclase.